The sequence spans 298 residues: Small ribosomal subunit protein uS2 (298 aa).

The interval 240 to 298 (AGENWDTQAPGAGVPGSAFAAASAAAATSWEADGGDWAASSAPPAGESWAETQPTEAKW) is disordered. Low complexity predominate over residues 248–271 (APGAGVPGSAFAAASAAAATSWEA). The span at 289–298 (AETQPTEAKW) shows a compositional bias: polar residues.

The protein belongs to the universal ribosomal protein uS2 family. In terms of assembly, component of the small ribosomal subunit. Mature ribosomes consist of a small (40S) and a large (60S) subunit. The 40S subunit contains about 33 different proteins and 1 molecule of RNA (18S). The 60S subunit contains about 49 different proteins and 3 molecules of RNA (25S, 5.8S and 5S). Interacts with rps21.

It is found in the cytoplasm. Functionally, required for the assembly and/or stability of the 40S ribosomal subunit. Required for the processing of the 20S rRNA-precursor to mature 18S rRNA in a late step of the maturation of 40S ribosomal subunits. The chain is Small ribosomal subunit protein uS2 (rps0) from Aspergillus clavatus (strain ATCC 1007 / CBS 513.65 / DSM 816 / NCTC 3887 / NRRL 1 / QM 1276 / 107).